Here is a 373-residue protein sequence, read N- to C-terminus: tRNA-specific 2-thiouridylase MnmA (373 aa).

ATP is bound by residues 12 to 19 and Met38; that span reads GMSGGVDS. The tract at residues 98 to 100 is interaction with target base in tRNA; sequence NPD. The Nucleophile role is filled by Cys103. Cys103 and Cys200 are oxidised to a cystine. Gly127 contacts ATP. The interaction with tRNA stretch occupies residues 150–152; sequence KDQ. Cys200 functions as the Cysteine persulfide intermediate in the catalytic mechanism. Positions 312 to 313 are interaction with tRNA; that stretch reads RY.

It belongs to the MnmA/TRMU family.

The protein localises to the cytoplasm. It carries out the reaction S-sulfanyl-L-cysteinyl-[protein] + uridine(34) in tRNA + AH2 + ATP = 2-thiouridine(34) in tRNA + L-cysteinyl-[protein] + A + AMP + diphosphate + H(+). Catalyzes the 2-thiolation of uridine at the wobble position (U34) of tRNA, leading to the formation of s(2)U34. The chain is tRNA-specific 2-thiouridylase MnmA from Streptococcus agalactiae serotype III (strain NEM316).